A 44-amino-acid polypeptide reads, in one-letter code: Protein PsbN (44 aa).

A helical transmembrane segment spans residues 6–26; that stretch reads FFFTFFLWFLLLSATGYSIYV.

It belongs to the PsbN family.

It is found in the plastid. The protein resides in the chloroplast thylakoid membrane. In terms of biological role, may play a role in photosystem I and II biogenesis. The chain is Protein PsbN from Tetradesmus obliquus (Green alga).